The sequence spans 56 residues: Large ribosomal subunit protein bL33 (56 aa).

Belongs to the bacterial ribosomal protein bL33 family.

This chain is Large ribosomal subunit protein bL33, found in Orientia tsutsugamushi (strain Ikeda) (Rickettsia tsutsugamushi).